The chain runs to 278 residues: Undecaprenyl-diphosphatase 3 (278 aa).

6 consecutive transmembrane segments (helical) span residues 42–62 (DITAFTAIIQVGAVFATLLYF), 88–108 (YRFGWAVILGSIPIGLVGVAF), 119–139 (LWFVGGALILWSGVMGYADHV), 187–207 (VAVTRLSFFLSIPALMAAAAL), 224–244 (ATIIATVVSFAVAYVAIAWLL), and 254–274 (VFIGYRLALGATVLFLVATGI).

Belongs to the UppP family.

Its subcellular location is the cell membrane. It carries out the reaction di-trans,octa-cis-undecaprenyl diphosphate + H2O = di-trans,octa-cis-undecaprenyl phosphate + phosphate + H(+). Functionally, catalyzes the dephosphorylation of undecaprenyl diphosphate (UPP). Confers resistance to bacitracin. This Frankia casuarinae (strain DSM 45818 / CECT 9043 / HFP020203 / CcI3) protein is Undecaprenyl-diphosphatase 3.